A 130-amino-acid chain; its full sequence is Anti-adapter protein IraD (130 aa).

This sequence belongs to the GpW/Gp25 family. IraD subfamily. In terms of assembly, interacts with RssB.

The protein localises to the cytoplasm. Its function is as follows. Inhibits RpoS proteolysis by regulating RssB activity, thereby increasing the stability of the sigma stress factor RpoS during oxidative stress. Its effect on RpoS stability is due to its interaction with RssB, which probably blocks the interaction of RssB with RpoS, and the consequent delivery of the RssB-RpoS complex to the ClpXP protein degradation pathway. This chain is Anti-adapter protein IraD, found in Escherichia coli (strain K12 / MC4100 / BW2952).